A 529-amino-acid polypeptide reads, in one-letter code: Peptide chain release factor 3 (529 aa).

A tr-type G domain is found at 7–275 (EQRRTFGIIS…AVVELAPSPR (269 aa)). GTP contacts are provided by residues 16 to 23 (SHPDAGKT), 84 to 88 (DTPGH), and 138 to 141 (NKLD).

The protein belongs to the TRAFAC class translation factor GTPase superfamily. Classic translation factor GTPase family. PrfC subfamily.

The protein localises to the cytoplasm. Its function is as follows. Increases the formation of ribosomal termination complexes and stimulates activities of RF-1 and RF-2. It binds guanine nucleotides and has strong preference for UGA stop codons. It may interact directly with the ribosome. The stimulation of RF-1 and RF-2 is significantly reduced by GTP and GDP, but not by GMP. In Syntrophus aciditrophicus (strain SB), this protein is Peptide chain release factor 3.